The chain runs to 286 residues: Bifunctional protein FolD (286 aa).

Residues 165 to 167 (GRS) and Ser190 each bind NADP(+).

It belongs to the tetrahydrofolate dehydrogenase/cyclohydrolase family. Homodimer.

The catalysed reaction is (6R)-5,10-methylene-5,6,7,8-tetrahydrofolate + NADP(+) = (6R)-5,10-methenyltetrahydrofolate + NADPH. It catalyses the reaction (6R)-5,10-methenyltetrahydrofolate + H2O = (6R)-10-formyltetrahydrofolate + H(+). The protein operates within one-carbon metabolism; tetrahydrofolate interconversion. Functionally, catalyzes the oxidation of 5,10-methylenetetrahydrofolate to 5,10-methenyltetrahydrofolate and then the hydrolysis of 5,10-methenyltetrahydrofolate to 10-formyltetrahydrofolate. This chain is Bifunctional protein FolD, found in Burkholderia lata (strain ATCC 17760 / DSM 23089 / LMG 22485 / NCIMB 9086 / R18194 / 383).